A 473-amino-acid polypeptide reads, in one-letter code: Dihydrolipoyl dehydrogenase (473 aa).

Residues 36–45 (ERYDKLGGVC), K54, and A117 each bind FAD. A disulfide bond links C45 and C50. Residues 182-186 (GSGII), D205, and 270-273 (AIGR) each bind NAD(+). 2 residues coordinate FAD: D313 and A321. Catalysis depends on H445, which acts as the Proton acceptor.

The protein belongs to the class-I pyridine nucleotide-disulfide oxidoreductase family. In terms of assembly, homodimer. Requires FAD as cofactor.

The protein localises to the cytoplasm. The catalysed reaction is N(6)-[(R)-dihydrolipoyl]-L-lysyl-[protein] + NAD(+) = N(6)-[(R)-lipoyl]-L-lysyl-[protein] + NADH + H(+). Lipoamide dehydrogenase is a component of the alpha-ketoacid dehydrogenase complexes. This chain is Dihydrolipoyl dehydrogenase (lpdA), found in Buchnera aphidicola subsp. Acyrthosiphon pisum (strain APS) (Acyrthosiphon pisum symbiotic bacterium).